The sequence spans 248 residues: tRNA pseudouridine synthase A (248 aa).

Catalysis depends on Asp52, which acts as the Nucleophile. Residue Tyr111 participates in substrate binding.

This sequence belongs to the tRNA pseudouridine synthase TruA family. As to quaternary structure, homodimer.

The enzyme catalyses uridine(38/39/40) in tRNA = pseudouridine(38/39/40) in tRNA. Functionally, formation of pseudouridine at positions 38, 39 and 40 in the anticodon stem and loop of transfer RNAs. In Methylocella silvestris (strain DSM 15510 / CIP 108128 / LMG 27833 / NCIMB 13906 / BL2), this protein is tRNA pseudouridine synthase A.